Consider the following 253-residue polypeptide: Ubiquinone biosynthesis O-methyltransferase (253 aa).

Residues arginine 47, glycine 78, aspartate 99, and methionine 141 each coordinate S-adenosyl-L-methionine.

Belongs to the methyltransferase superfamily. UbiG/COQ3 family.

The enzyme catalyses a 3-demethylubiquinol + S-adenosyl-L-methionine = a ubiquinol + S-adenosyl-L-homocysteine + H(+). It carries out the reaction a 3-(all-trans-polyprenyl)benzene-1,2-diol + S-adenosyl-L-methionine = a 2-methoxy-6-(all-trans-polyprenyl)phenol + S-adenosyl-L-homocysteine + H(+). It functions in the pathway cofactor biosynthesis; ubiquinone biosynthesis. O-methyltransferase that catalyzes the 2 O-methylation steps in the ubiquinone biosynthetic pathway. The sequence is that of Ubiquinone biosynthesis O-methyltransferase from Rhodopseudomonas palustris (strain HaA2).